The following is a 118-amino-acid chain: Nucleoid-associated protein CTN_1899 (118 aa).

It belongs to the YbaB/EbfC family. Homodimer.

The protein localises to the cytoplasm. The protein resides in the nucleoid. Functionally, binds to DNA and alters its conformation. May be involved in regulation of gene expression, nucleoid organization and DNA protection. This Thermotoga neapolitana (strain ATCC 49049 / DSM 4359 / NBRC 107923 / NS-E) protein is Nucleoid-associated protein CTN_1899.